We begin with the raw amino-acid sequence, 168 residues long: Mediator of RNA polymerase II transcription subunit 7b (168 aa).

Positions 1-12 (MATATYPPPPPY) are enriched in pro residues. The interval 1–33 (MATATYPPPPPYYRLYKDFSENTDSAPEPPPPI) is disordered. Coiled coils occupy residues 64–92 (KDSN…ADVL) and 132–162 (IMEL…KDAF).

The protein belongs to the Mediator complex subunit 7 family. Component of the Mediator complex. Interacts with MEE14/CBP1.

The protein resides in the nucleus. Its function is as follows. Component of the Mediator complex, a coactivator involved in the regulated transcription of nearly all RNA polymerase II-dependent genes. Mediator functions as a bridge to convey information from gene-specific regulatory proteins to the basal RNA polymerase II transcription machinery. The Mediator complex, having a compact conformation in its free form, is recruited to promoters by direct interactions with regulatory proteins and serves for the assembly of a functional pre-initiation complex with RNA polymerase II and the general transcription factors. This is Mediator of RNA polymerase II transcription subunit 7b (MED7B) from Arabidopsis thaliana (Mouse-ear cress).